The chain runs to 125 residues: Glycine cleavage system H protein 1 (125 aa).

Positions 22–103 (KAYIGITDYA…PYGSWLVAVR (82 aa)) constitute a Lipoyl-binding domain. Lys-63 carries the post-translational modification N6-lipoyllysine.

The protein belongs to the GcvH family. In terms of assembly, the glycine cleavage system is composed of four proteins: P, T, L and H. (R)-lipoate serves as cofactor.

In terms of biological role, the glycine cleavage system catalyzes the degradation of glycine. The H protein shuttles the methylamine group of glycine from the P protein to the T protein. The chain is Glycine cleavage system H protein 1 from Caldanaerobacter subterraneus subsp. tengcongensis (strain DSM 15242 / JCM 11007 / NBRC 100824 / MB4) (Thermoanaerobacter tengcongensis).